The chain runs to 156 residues: E3 ubiquitin-protein ligase RNF181 (156 aa).

Residues 79–120 (CPVCLLEFEEQESVREMPCKHLFHTGCILPWLNKTNSCPLCR) form an RING-type; atypical zinc finger. The disordered stretch occupies residues 135-156 (KDKERRRQREHRLEDLHGAMYT).

This sequence belongs to the RNF181 family.

It catalyses the reaction S-ubiquitinyl-[E2 ubiquitin-conjugating enzyme]-L-cysteine + [acceptor protein]-L-lysine = [E2 ubiquitin-conjugating enzyme]-L-cysteine + N(6)-ubiquitinyl-[acceptor protein]-L-lysine.. Its pathway is protein modification; protein ubiquitination. E3 ubiquitin-protein ligase which accepts ubiquitin from an E2 ubiquitin-conjugating enzyme in the form of a thioester and then directly transfers the ubiquitin to targeted substrates. Catalyzes monoubiquitination of 26S proteasome subunit PSMC2/RPT1. The chain is E3 ubiquitin-protein ligase RNF181 (rnf181) from Danio rerio (Zebrafish).